The following is a 768-amino-acid chain: Ribonucleoside-diphosphate reductase large chain (768 aa).

ATP is bound by residues 7–8 (SK) and 13–19 (EKLGIDL). Positions 196 and 211 each coordinate GDP. Cysteine 212 and cysteine 437 form a disulfide bridge. DTTP contacts are provided by residues 220-222 (DSI), lysine 237, and arginine 250. Position 420 (asparagine 420) interacts with GDP. Asparagine 420 (proton acceptor) is an active-site residue. The Cysteine radical intermediate role is filled by cysteine 422. Glutamate 424 contributes to the GDP binding site. Residue glutamate 424 is the Proton acceptor of the active site.

Belongs to the ribonucleoside diphosphate reductase large chain family. As to quaternary structure, heterodimer of a large and a small subunit.

It carries out the reaction a 2'-deoxyribonucleoside 5'-diphosphate + [thioredoxin]-disulfide + H2O = a ribonucleoside 5'-diphosphate + [thioredoxin]-dithiol. Its activity is regulated as follows. Under complex allosteric control mediated by deoxynucleoside triphosphates and ATP binding to separate specificity and activation sites on the large subunit. The type of nucleotide bound at the specificity site determines substrate preference. It seems probable that ATP makes the enzyme reduce CDP and UDP, dGTP favors ADP reduction and dTTP favors GDP reduction. Stimulated by ATP and inhibited by dATP binding to the activity site. Provides the precursors necessary for DNA synthesis. Catalyzes the biosynthesis of deoxyribonucleotides from the corresponding ribonucleotides. The chain is Ribonucleoside-diphosphate reductase large chain from Encephalitozoon cuniculi (strain GB-M1) (Microsporidian parasite).